Here is a 362-residue protein sequence, read N- to C-terminus: S-adenosylmethionine decarboxylase proenzyme (362 aa).

Catalysis depends on residues Glu11 and Glu14. Ser71 serves as the catalytic Schiff-base intermediate with substrate; via pyruvic acid. Ser71 carries the pyruvic acid (Ser); by autocatalysis modification. The active-site Proton donor; for catalytic activity is Cys85. Residues Ser234 and His247 each act as proton acceptor; for processing activity in the active site.

It belongs to the eukaryotic AdoMetDC family. Requires pyruvate as cofactor. In terms of processing, is synthesized initially as an inactive proenzyme. Formation of the active enzyme involves a self-maturation process in which the active site pyruvoyl group is generated from an internal serine residue via an autocatalytic post-translational modification. Two non-identical subunits are generated from the proenzyme in this reaction, and the pyruvate is formed at the N-terminus of the alpha chain, which is derived from the carboxyl end of the proenzyme. The post-translation cleavage follows an unusual pathway, termed non-hydrolytic serinolysis, in which the side chain hydroxyl group of the serine supplies its oxygen atom to form the C-terminus of the beta chain, while the remainder of the serine residue undergoes an oxidative deamination to produce ammonia and the pyruvoyl group blocking the N-terminus of the alpha chain.

The catalysed reaction is S-adenosyl-L-methionine + H(+) = S-adenosyl 3-(methylsulfanyl)propylamine + CO2. The protein operates within amine and polyamine biosynthesis; S-adenosylmethioninamine biosynthesis; S-adenosylmethioninamine from S-adenosyl-L-methionine: step 1/1. This is S-adenosylmethionine decarboxylase proenzyme (SAMDC) from Ipomoea batatas (Sweet potato).